Reading from the N-terminus, the 255-residue chain is Imidazole glycerol phosphate synthase subunit HisF (255 aa).

Catalysis depends on residues Asp12 and Asp131.

The protein belongs to the HisA/HisF family. In terms of assembly, heterodimer of HisH and HisF.

It is found in the cytoplasm. It catalyses the reaction 5-[(5-phospho-1-deoxy-D-ribulos-1-ylimino)methylamino]-1-(5-phospho-beta-D-ribosyl)imidazole-4-carboxamide + L-glutamine = D-erythro-1-(imidazol-4-yl)glycerol 3-phosphate + 5-amino-1-(5-phospho-beta-D-ribosyl)imidazole-4-carboxamide + L-glutamate + H(+). Its pathway is amino-acid biosynthesis; L-histidine biosynthesis; L-histidine from 5-phospho-alpha-D-ribose 1-diphosphate: step 5/9. In terms of biological role, IGPS catalyzes the conversion of PRFAR and glutamine to IGP, AICAR and glutamate. The HisF subunit catalyzes the cyclization activity that produces IGP and AICAR from PRFAR using the ammonia provided by the HisH subunit. This chain is Imidazole glycerol phosphate synthase subunit HisF, found in Ruthia magnifica subsp. Calyptogena magnifica.